The primary structure comprises 213 residues: Nucleoside triphosphate pyrophosphatase (213 aa).

The active-site Proton acceptor is D79.

The protein belongs to the Maf family. A divalent metal cation is required as a cofactor.

Its subcellular location is the cytoplasm. It carries out the reaction a ribonucleoside 5'-triphosphate + H2O = a ribonucleoside 5'-phosphate + diphosphate + H(+). It catalyses the reaction a 2'-deoxyribonucleoside 5'-triphosphate + H2O = a 2'-deoxyribonucleoside 5'-phosphate + diphosphate + H(+). Nucleoside triphosphate pyrophosphatase. May have a dual role in cell division arrest and in preventing the incorporation of modified nucleotides into cellular nucleic acids. This Rhodococcus erythropolis (strain PR4 / NBRC 100887) protein is Nucleoside triphosphate pyrophosphatase.